A 258-amino-acid polypeptide reads, in one-letter code: Synaptosomal-associated protein 29 (258 aa).

Residues Met-1–Gln-43 are disordered. Phosphoserine occurs at positions 65, 77, and 114. A coiled-coil region spans residues Val-76–Lys-107. Disordered regions lie at residues Pro-127–Lys-147 and Gln-161–Ala-188. 2 positions are modified to phosphothreonine: Thr-130 and Thr-137. A compositionally biased stretch (polar residues) spans Pro-131–Pro-142. Residues Ser-163, Ser-182, Ser-185, Ser-204, and Ser-210 each carry the phosphoserine modification. One can recognise a t-SNARE coiled-coil homology domain in the interval Arg-196–Leu-258.

Belongs to the SNAP-25 family. As to quaternary structure, forms a SNARE complex, composed of VAMP8, SNAP29 and STX17, involved in fusion of autophagosome with lysosome. Interacts with multiple syntaxins including STX6. Interacts with EIPR1. Interacts with STX17; this interaction is increased in the absence of TMEM39A.

The protein resides in the cytoplasm. It is found in the golgi apparatus membrane. It localises to the cytoplasmic vesicle. The protein localises to the autophagosome membrane. Its subcellular location is the cell projection. The protein resides in the cilium membrane. Its function is as follows. SNAREs, soluble N-ethylmaleimide-sensitive factor-attachment protein receptors, are essential proteins for fusion of cellular membranes. SNAREs localized on opposing membranes assemble to form a trans-SNARE complex, an extended, parallel four alpha-helical bundle that drives membrane fusion. SNAP29 is a SNARE involved in autophagy through the direct control of autophagosome membrane fusion with the lysososome membrane. Also plays a role in ciliogenesis by regulating membrane fusions. The protein is Synaptosomal-associated protein 29 of Bos taurus (Bovine).